The following is an 862-amino-acid chain: MNNTTSDINDQRYEPREVEAYWQKEWASDDLYRTNTEVNKENTFYALSMFPYPSGSLHMGHVRNYVITDVLARYKRMKGFNVLHPMGWDSFGLPAENAAIEREISPSTWTDKNISQMKDQLDRLGLSIDWSKEVTTCKEEYYKWTQYIFNQLHKNNLAYQKKATVNWDPIDQTVLANEQVDAEGKSWRSGAKVEKKELNQWFLRITSFAEDLNKDLIKLNDWPDRVRVMQKNWIGKSIGAEITFEIKNSDQKITAFTTRIDTVYGVSYLVLASNHPLIDQLISSNDIDKLNDFRQTQEKLSDLERNSDTRQKLGMYLGVDAINPANNKEIPIWIGDYVIMEYGTGAVMGVPAHDSRDYQFAKSYDLPIQYVIKPNIDEDESYLNAEFVDKGIMINSDKFNGIESDIAKTQILEFGSNSNWAKPKITYKLRDWLISRQRYWGCPIPIINCKKCGQVRVPDNDLPVVLPIDIKLTGKGKSPLTTKTEWINTCCPKCGTEAKRETDTMDTFMCSSWYFLRYINPDNCEKPFLKSEIDKWLPVKQYVGGIEHAILHLLYSRFLTKALKKCGLINIDEPFKKLLTQGMVQAVTFKNPNTNKYFSKDQIKDIDNPKDPLTGENIEIIYEKMSKSKYNGVDPSVVIDKYGADTARMFILFKAPPEKDLEWDDSDVEGQYRFIQRLWKFVINTFKLTNNNSRSNIEKEKSKDEEALRLINIAIKEITDDLDNLQFNTAISELMKVVNGLSLIVNYCSNETLNKVISILVKITSPFSPHIAEELWKTIGNTQSIHLQSWPEFDAGAIEQDTFKLMIQINGKVRGSINASKNLSKENLEDLAIKTEAAIKWMDGKEPKRIIVVPNKLVNIVI.

Residues 51–61 carry the 'HIGH' region motif; sequence PYPSGSLHMGH. The short motif at 624 to 628 is the 'KMSKS' region element; it reads KMSKS. Lys-627 contributes to the ATP binding site.

Belongs to the class-I aminoacyl-tRNA synthetase family.

It is found in the cytoplasm. It catalyses the reaction tRNA(Leu) + L-leucine + ATP = L-leucyl-tRNA(Leu) + AMP + diphosphate. The polypeptide is Leucine--tRNA ligase (Prochlorococcus marinus (strain NATL2A)).